The chain runs to 81 residues: Three-finger toxin 3FTx-Oxy6 (81 aa).

The N-terminal stretch at 1-21 is a signal peptide; the sequence is MKTLLLSLVVMTIVYLDLGYT. Intrachain disulfides connect Cys-24–Cys-43, Cys-36–Cys-61, Cys-65–Cys-73, and Cys-74–Cys-79.

Belongs to the three-finger toxin family. Short-chain subfamily. Expressed by the venom gland.

It localises to the secreted. The protein is Three-finger toxin 3FTx-Oxy6 of Oxyuranus microlepidotus (Inland taipan).